Here is a 249-residue protein sequence, read N- to C-terminus: Derlin-2.2 (249 aa).

The Cytoplasmic segment spans residues 1–21; it reads MAQAVEEWYRQMPIITRSYLT. The chain crosses the membrane as a helical span at residues 22-42; the sequence is AAVVTTVGCTLEIISPYHLYL. At 43 to 96 the chain is on the lumenal side; the sequence is NPKLVVQHYEIWRLVTNFLYFRKMDLDFLFHMFFLARYCKLLEENSFRGRTADF. Residues 97–117 traverse the membrane as a helical segment; the sequence is FYMLLFGATVLTGIVLIGGMI. Over 118 to 122 the chain is Cytoplasmic; it reads PYISE. The chain crosses the membrane as a helical span at residues 123–143; it reads TFARILFLSNSLTFMMVYVWS. Over 144 to 152 the chain is Lumenal; that stretch reads KHNPFIHMS. Residues 153 to 173 traverse the membrane as a helical segment; it reads FLGLFTFTAAYLPWVLLGFSI. The Cytoplasmic portion of the chain corresponds to 174–249; the sequence is LVGSSTWVDL…GAIGVDPQAQ (76 aa).

It belongs to the derlin family. In terms of tissue distribution, expressed in roots, stalks, leaves, immature ears, embryo and endosperm.

The protein resides in the endoplasmic reticulum membrane. In terms of biological role, may be involved in the degradation process of specific misfolded endoplasmic reticulum (ER) luminal proteins. The chain is Derlin-2.2 (DER2.2) from Zea mays (Maize).